Consider the following 2109-residue polypeptide: Nonribosomal peptide synthetase sidE (2109 aa).

The segment at 31-512 (LTPPSPPCLV…QNGKVDFRAI (482 aa)) is adenylation 1. One can recognise a Carrier 1 domain in the interval 537-613 (AGLSETASKI…EIADTVQLDS (77 aa)). Residue Ser-574 is modified to O-(pantetheine 4'-phosphoryl)serine. The segment at 646 to 908 (DAYPVTALQE…LAVVPYAIAI (263 aa)) is condensation 1. Positions 1058-1555 (RTLNGQFEAT…GKANRKQLKA (498 aa)) are adenylation 2. The Carrier 2 domain occupies 1584–1660 (PLASETQKVL…AMADQLKGES (77 aa)). Ser-1621 bears the O-(pantetheine 4'-phosphoryl)serine mark. Residues 1695–1968 (YPCPPGQAEF…NFLPMRSKVD (274 aa)) form a condensation 2 region.

It belongs to the NRP synthetase family.

It participates in siderophore biosynthesis. Nonribosomal peptide synthetase; part of the siderophore biosynthetic pathway. Aspergillus fumigatus produces four types of siderophores, low-molecular-mass iron chelators, including excreted fusarinine C (FsC) and triacetylfusarinine C (TAFC) for iron uptake and intacellular ferricrocin (FC) for hyphal and hydroxyferricrocin (HFC) for conidial iron distribution and storage. TAFC consists of three N(2)-acetyl-N(5)-anhydromevalonyl-N(5)-hydroxyornithine residues cyclically linked by ester bonds; FC is a cyclic hexapeptide with the structure Gly-Ser-Gly-(N(5)-acetyl-N(5)-hydroxyornithine)x3. The biosynthesis of all four siderophores depends on the hydroxylation of ornithine, catalyzed by the monooxygenase sidA. Subsequently, the pathways for biosynthesis of extra- and intracellular siderophores split. For biosynthesis of extracellular siderophores, the transacylase sidF transfers anhydromevalonyl to N(5)-hydroxyornithine. The required anhydromevalonyl-CoA moiety is derived from mevalonate by CoA ligation and dehydration catalyzed by sidI and sidH respectively. The acetylation of N(5)-hydroxyornithine for FC biosynthesis involves the constitutively expressed sidL. FC is hydroxylated to HFC by an as yet uncharacterized enzyme during conidiation. Assembly of fusarinine C (FsC) and FC is catalyzed by two different nonribosomal peptide synthetases (NRPS), sidD and sidC respectively. Subsequently, sidG catalyzes N2-acetylation of FsC for forming TAFC. Both extra- and intracellular siderophores are crucial for growth during iron limitation and virulence. In Aspergillus fumigatus (strain ATCC MYA-4609 / CBS 101355 / FGSC A1100 / Af293) (Neosartorya fumigata), this protein is Nonribosomal peptide synthetase sidE.